The following is a 600-amino-acid chain: Pyranose dehydrogenase (600 aa).

The first 25 residues, 1–25, serve as a signal peptide directing secretion; sequence MFPRVVRLNSRLVSFALLGLQIANG. Asn99 and Asn114 each carry an N-linked (GlcNAc...) asparagine glycan. His127 carries the post-translational modification Tele-8alpha-FAD histidine. N-linked (GlcNAc...) asparagine glycans are attached at residues Asn199, Asn275, Asn342, Asn399, and Asn507. Residue His535 is the Proton acceptor of the active site. Asn546 carries N-linked (GlcNAc...) asparagine glycosylation. His579 is an active-site residue.

The protein belongs to the GMC oxidoreductase family. In terms of assembly, monomer. FAD is required as a cofactor. N-glycosylated.

Its subcellular location is the secreted. It catalyses the reaction pyranose + acceptor = pyranos-2-ulose + reduced acceptor.. The enzyme catalyses pyranose + acceptor = pyranos-3-ulose + reduced acceptor.. It carries out the reaction pyranose + acceptor = pyranos-2,3-diulose + reduced acceptor.. The catalysed reaction is a pyranoside + acceptor = a pyranosid-3-ulose + reduced acceptor.. It catalyses the reaction a pyranoside + acceptor = a pyranosid-3,4-diulose + reduced acceptor.. In terms of biological role, catalyzes the single-oxidation or sequential double oxidation reaction of carbohydrates primarily at carbon-2 and/or carbon-3 with the concomitant reduction of the flavin. The enzyme exhibits a broad sugar substrate specificity, oxidizing different aldopyranoses to the corresponding C-1, C-2, C-3 or C-1,2, C-2,3 and C-3,4 (di)dehydro sugars with substrate-specific regioselectivity. Accepts only a narrow range of electron acceptors such as substituted benzoquinones and complexed metal ions and reacts extremely slowly with O(2) as acceptor. May play a role in the natural recycling of plant matter by oxidizing all major monosaccharides in lignocellulose and by reducing quinone compounds or reactive radical species generated during lignin depolymerization. This is Pyranose dehydrogenase from Agaricus xanthodermus (Poison yellow meadow mushroom).